The following is a 429-amino-acid chain: Phosphomethylpyrimidine synthase (429 aa).

Substrate contacts are provided by residues N66, M95, Y124, H163, 185–187 (SRG), 226–229 (DAMR), and E265. Zn(2+) is bound at residue H269. Y292 lines the substrate pocket. H333 contributes to the Zn(2+) binding site. Residues C409, C412, and C416 each contribute to the [4Fe-4S] cluster site.

Belongs to the ThiC family. The cofactor is [4Fe-4S] cluster.

It carries out the reaction 5-amino-1-(5-phospho-beta-D-ribosyl)imidazole + S-adenosyl-L-methionine = 4-amino-2-methyl-5-(phosphooxymethyl)pyrimidine + CO + 5'-deoxyadenosine + formate + L-methionine + 3 H(+). Its pathway is cofactor biosynthesis; thiamine diphosphate biosynthesis. Catalyzes the synthesis of the hydroxymethylpyrimidine phosphate (HMP-P) moiety of thiamine from aminoimidazole ribotide (AIR) in a radical S-adenosyl-L-methionine (SAM)-dependent reaction. The protein is Phosphomethylpyrimidine synthase of Methanopyrus kandleri (strain AV19 / DSM 6324 / JCM 9639 / NBRC 100938).